The following is a 262-amino-acid chain: Indole-3-glycerol phosphate synthase (262 aa).

The protein belongs to the TrpC family.

The catalysed reaction is 1-(2-carboxyphenylamino)-1-deoxy-D-ribulose 5-phosphate + H(+) = (1S,2R)-1-C-(indol-3-yl)glycerol 3-phosphate + CO2 + H2O. Its pathway is amino-acid biosynthesis; L-tryptophan biosynthesis; L-tryptophan from chorismate: step 4/5. The sequence is that of Indole-3-glycerol phosphate synthase from Clostridium acetobutylicum (strain ATCC 824 / DSM 792 / JCM 1419 / IAM 19013 / LMG 5710 / NBRC 13948 / NRRL B-527 / VKM B-1787 / 2291 / W).